The following is a 373-amino-acid chain: MTSQRSLPADDFGIYYVLAECTDYYDTLPVKEADGSQPCSQGVTGLRNLGNTCYMNAILQCLCSISPLVEYFLSGKYITALQNDCSEVATAFAYLMTDMWLGDSDCVSPEIFRSALGNLYPAFTKKTQQDAQEFLIYVLNELHEALKKYHYPRRRSHEKGSAQRCCRKWITTETSVITQLFEGQLNYSIVCLKCEKCTYKNEVFTVLSLPIPSEYECSLQDCLQCFFQQDTLTWNNQIHCSFCETKQETAVRAGISKAPKIIIFHLKRFDIQGTTKRKLRTDIHYPLTNLDLTPYICPIFRKYPKYNLCAVVNHFGDLDGGHYTAFCKNSFTQAWYSFDDTRVSEIPDTSVQNATAYLLFYSCQPFSIPIQKH.

A USP domain is found at 44–364 (TGLRNLGNTC…TAYLLFYSCQ (321 aa)). Cysteine 53 functions as the Nucleophile in the catalytic mechanism. The active-site Proton acceptor is histidine 322.

This sequence belongs to the peptidase C19 family.

It is found in the cytoplasm. The protein localises to the cytoskeleton. Its subcellular location is the microtubule organizing center. It localises to the centrosome. The protein resides in the nucleus. It catalyses the reaction Thiol-dependent hydrolysis of ester, thioester, amide, peptide and isopeptide bonds formed by the C-terminal Gly of ubiquitin (a 76-residue protein attached to proteins as an intracellular targeting signal).. Its function is as follows. Deubiquitinating enzyme that removes conjugated ubiquitin from specific proteins to regulate different cellular processes. Regulates the inflammasome signaling pathway by deubiquitinating 'Lys-63'-linked polyubiquitination of the PYCARD/ASC adapter protein. Regulates the ubiquitination and stability of the ACE2 protein. Acts as a negative regulator of the G2/M checkpoint pathway, by preventing serine/threonine kinase WEE1 degradation, thereby repressing entry into mitosis following activation of the G2/M DNA damage checkpoint. This chain is Ubiquitin carboxyl-terminal hydrolase 50 (USP50), found in Macaca fascicularis (Crab-eating macaque).